Consider the following 390-residue polypeptide: 23S rRNA (uracil(747)-C(5))-methyltransferase RlmC (390 aa).

4 residues coordinate [4Fe-4S] cluster: Cys12, Cys20, Cys23, and Cys100. Gln225, Phe254, Glu275, and Asn322 together coordinate S-adenosyl-L-methionine. The active-site Nucleophile is Cys349.

Belongs to the class I-like SAM-binding methyltransferase superfamily. RNA M5U methyltransferase family. RlmC subfamily.

It catalyses the reaction uridine(747) in 23S rRNA + S-adenosyl-L-methionine = 5-methyluridine(747) in 23S rRNA + S-adenosyl-L-homocysteine + H(+). Its function is as follows. Catalyzes the formation of 5-methyl-uridine at position 747 (m5U747) in 23S rRNA. In Shewanella baltica (strain OS155 / ATCC BAA-1091), this protein is 23S rRNA (uracil(747)-C(5))-methyltransferase RlmC.